Here is a 321-residue protein sequence, read N- to C-terminus: MARSKIALIGAGQIGGTLAHLAALKELGDIVLFDIAEGTPQGKALDLAESGPVEGFNASLKGANSYADIAGADVIIVTAGVPRKPGMSRDDLLGINLKVMDAVGGGIKQYAPDAFVICITNPLDAMVWALQKSSGLAPAKIVGMAGVLDSARFRYFLSEEFKVSVEDVTAFVLGGHGDDMVPSLRYSTVAGIPLTDLVKLGWTTQERLDAIVERTRKGGGEIVNLLKTGSAFYAPAASAIAMAEAYLKDKRRVLPCAAQLSGQYGVDNLYVGVPVVIGANGVEKIVEVTLDESEKAMFAKSVESVRGLVEACKVINPALAG.

NAD(+)-binding positions include 10–15 (GAGQIG) and aspartate 34. The substrate site is built by arginine 83 and arginine 89. NAD(+)-binding positions include asparagine 96 and 119–121 (ITN). Residues asparagine 121 and arginine 152 each coordinate substrate. Histidine 176 acts as the Proton acceptor in catalysis.

This sequence belongs to the LDH/MDH superfamily. MDH type 3 family.

It carries out the reaction (S)-malate + NAD(+) = oxaloacetate + NADH + H(+). Functionally, catalyzes the reversible oxidation of malate to oxaloacetate. In Methylocella silvestris (strain DSM 15510 / CIP 108128 / LMG 27833 / NCIMB 13906 / BL2), this protein is Malate dehydrogenase.